The following is a 364-amino-acid chain: Mannose-1-phosphate guanyltransferase (364 aa).

This sequence belongs to the transferase hexapeptide repeat family.

The protein localises to the cytoplasm. It carries out the reaction alpha-D-mannose 1-phosphate + GTP + H(+) = GDP-alpha-D-mannose + diphosphate. The protein operates within nucleotide-sugar biosynthesis; GDP-alpha-D-mannose biosynthesis; GDP-alpha-D-mannose from alpha-D-mannose 1-phosphate (GTP route): step 1/1. Functionally, involved in cell wall synthesis where it is required for glycosylation. Involved in cell cycle progression through cell-size checkpoint. In Pichia angusta (Yeast), this protein is Mannose-1-phosphate guanyltransferase (MPG1).